Here is an 828-residue protein sequence, read N- to C-terminus: DNA gyrase subunit A (828 aa).

One can recognise a Topo IIA-type catalytic domain in the interval 32–497; that stretch reads LPDVRDGLKP…EVLSLEDEDL (466 aa). Tyrosine 120 serves as the catalytic O-(5'-phospho-DNA)-tyrosine intermediate. Positions 524–530 match the GyrA-box motif; it reads QKRGGRG.

The protein belongs to the type II topoisomerase GyrA/ParC subunit family. In terms of assembly, heterotetramer, composed of two GyrA and two GyrB chains. In the heterotetramer, GyrA contains the active site tyrosine that forms a transient covalent intermediate with DNA, while GyrB binds cofactors and catalyzes ATP hydrolysis.

It localises to the cytoplasm. The enzyme catalyses ATP-dependent breakage, passage and rejoining of double-stranded DNA.. In terms of biological role, a type II topoisomerase that negatively supercoils closed circular double-stranded (ds) DNA in an ATP-dependent manner to modulate DNA topology and maintain chromosomes in an underwound state. Negative supercoiling favors strand separation, and DNA replication, transcription, recombination and repair, all of which involve strand separation. Also able to catalyze the interconversion of other topological isomers of dsDNA rings, including catenanes and knotted rings. Type II topoisomerases break and join 2 DNA strands simultaneously in an ATP-dependent manner. The protein is DNA gyrase subunit A of Streptococcus pyogenes serotype M3 (strain ATCC BAA-595 / MGAS315).